The sequence spans 547 residues: Chaperonin GroEL 1 (547 aa).

Residues 30-33, Lys-51, 87-91, Gly-415, and Asp-495 contribute to the ATP site; these read TLGP and DGTTT.

It belongs to the chaperonin (HSP60) family. In terms of assembly, forms a cylinder of 14 subunits composed of two heptameric rings stacked back-to-back. Interacts with the co-chaperonin GroES.

It is found in the cytoplasm. It catalyses the reaction ATP + H2O + a folded polypeptide = ADP + phosphate + an unfolded polypeptide.. Together with its co-chaperonin GroES, plays an essential role in assisting protein folding. The GroEL-GroES system forms a nano-cage that allows encapsulation of the non-native substrate proteins and provides a physical environment optimized to promote and accelerate protein folding. The sequence is that of Chaperonin GroEL 1 from Azorhizobium caulinodans (strain ATCC 43989 / DSM 5975 / JCM 20966 / LMG 6465 / NBRC 14845 / NCIMB 13405 / ORS 571).